Consider the following 484-residue polypeptide: Protein nucleotidyltransferase YdiU (484 aa).

ATP is bound by residues Gly81, Gly83, Arg84, Lys103, Asp115, Gly116, Arg166, and Arg173. The active-site Proton acceptor is the Asp244. Residues Asn245 and Asp254 each contribute to the Mg(2+) site. An ATP-binding site is contributed by Asp254.

Belongs to the SELO family. The cofactor is Mg(2+). Requires Mn(2+) as cofactor.

It carries out the reaction L-seryl-[protein] + ATP = 3-O-(5'-adenylyl)-L-seryl-[protein] + diphosphate. The enzyme catalyses L-threonyl-[protein] + ATP = 3-O-(5'-adenylyl)-L-threonyl-[protein] + diphosphate. The catalysed reaction is L-tyrosyl-[protein] + ATP = O-(5'-adenylyl)-L-tyrosyl-[protein] + diphosphate. It catalyses the reaction L-histidyl-[protein] + UTP = N(tele)-(5'-uridylyl)-L-histidyl-[protein] + diphosphate. It carries out the reaction L-seryl-[protein] + UTP = O-(5'-uridylyl)-L-seryl-[protein] + diphosphate. The enzyme catalyses L-tyrosyl-[protein] + UTP = O-(5'-uridylyl)-L-tyrosyl-[protein] + diphosphate. Functionally, nucleotidyltransferase involved in the post-translational modification of proteins. It can catalyze the addition of adenosine monophosphate (AMP) or uridine monophosphate (UMP) to a protein, resulting in modifications known as AMPylation and UMPylation. The sequence is that of Protein nucleotidyltransferase YdiU from Shewanella baltica (strain OS223).